Here is a 76-residue protein sequence, read N- to C-terminus: ATP synthase subunit 9, mitochondrial (76 aa).

A run of 2 helical transmembrane segments spans residues 13–35 and 50–72; these read GISTIGLLGAGIGIAIVFAALIQ and FAILGFAISEATGLFCLMISFLL.

Belongs to the ATPase C chain family. F-type ATPases have 2 components, CF(1) - the catalytic core - and CF(0) - the membrane proton channel. In yeast, the dimeric form of ATP synthase consists of 18 polypeptides: alpha, beta, gamma, delta, epsilon, 4 (B), 5 (OSCP), 6 (A), 8, 9 (C), d, E (Tim11), f, g, h, i, j and k.

It localises to the mitochondrion membrane. Its function is as follows. Mitochondrial membrane ATP synthase (F(1)F(0) ATP synthase or Complex V) produces ATP from ADP in the presence of a proton gradient across the membrane which is generated by electron transport complexes of the respiratory chain. F-type ATPases consist of two structural domains, F(1) - containing the extramembraneous catalytic core and F(0) - containing the membrane proton channel, linked together by a central stalk and a peripheral stalk. During catalysis, ATP synthesis in the catalytic domain of F(1) is coupled via a rotary mechanism of the central stalk subunits to proton translocation. Part of the complex F(0) domain. A homomeric c-ring of probably 10 subunits is part of the complex rotary element. The sequence is that of ATP synthase subunit 9, mitochondrial (ATP9) from Eremothecium gossypii (strain ATCC 10895 / CBS 109.51 / FGSC 9923 / NRRL Y-1056) (Yeast).